Reading from the N-terminus, the 592-residue chain is Aspartate--tRNA ligase (592 aa).

An L-aspartate-binding site is contributed by Glu171. An aspartate region spans residues 195-198; that stretch reads QLFK. Residue Arg217 participates in L-aspartate binding. ATP-binding positions include 217–219 and Gln226; that span reads RDE. His448 lines the L-aspartate pocket. Residue Glu482 participates in ATP binding. Arg489 is an L-aspartate binding site. 534–537 contributes to the ATP binding site; it reads GLDR.

Belongs to the class-II aminoacyl-tRNA synthetase family. Type 1 subfamily. Homodimer.

Its subcellular location is the cytoplasm. The catalysed reaction is tRNA(Asp) + L-aspartate + ATP = L-aspartyl-tRNA(Asp) + AMP + diphosphate. Its function is as follows. Catalyzes the attachment of L-aspartate to tRNA(Asp) in a two-step reaction: L-aspartate is first activated by ATP to form Asp-AMP and then transferred to the acceptor end of tRNA(Asp). This is Aspartate--tRNA ligase from Pseudoalteromonas translucida (strain TAC 125).